We begin with the raw amino-acid sequence, 227 residues long: ATP synthase F(0) complex subunit a (227 aa).

Transmembrane regions (helical) follow at residues 14-34, 69-89, 98-118, 139-159, 167-187, and 190-210; these read LLGH…FPSP, WALM…LGLL, QLSM…LTGL, IPAL…ALGV, AGHL…PILP, and SILT…VAMI.

It belongs to the ATPase A chain family. As to quaternary structure, component of the ATP synthase complex composed at least of ATP5F1A/subunit alpha, ATP5F1B/subunit beta, ATP5MC1/subunit c (homooctomer), MT-ATP6/subunit a, MT-ATP8/subunit 8, ATP5ME/subunit e, ATP5MF/subunit f, ATP5MG/subunit g, ATP5MK/subunit k, ATP5MJ/subunit j, ATP5F1C/subunit gamma, ATP5F1D/subunit delta, ATP5F1E/subunit epsilon, ATP5PF/subunit F6, ATP5PB/subunit b, ATP5PD/subunit d, ATP5PO/subunit OSCP. ATP synthase complex consists of a soluble F(1) head domain (subunits alpha(3) and beta(3)) - the catalytic core - and a membrane F(0) domain - the membrane proton channel (subunits c, a, 8, e, f, g, k and j). These two domains are linked by a central stalk (subunits gamma, delta, and epsilon) rotating inside the F1 region and a stationary peripheral stalk (subunits F6, b, d, and OSCP). Interacts with DNAJC30; interaction is direct.

It is found in the mitochondrion inner membrane. It catalyses the reaction H(+)(in) = H(+)(out). Subunit a, of the mitochondrial membrane ATP synthase complex (F(1)F(0) ATP synthase or Complex V) that produces ATP from ADP in the presence of a proton gradient across the membrane which is generated by electron transport complexes of the respiratory chain. ATP synthase complex consist of a soluble F(1) head domain - the catalytic core - and a membrane F(1) domain - the membrane proton channel. These two domains are linked by a central stalk rotating inside the F(1) region and a stationary peripheral stalk. During catalysis, ATP synthesis in the catalytic domain of F(1) is coupled via a rotary mechanism of the central stalk subunits to proton translocation. With the subunit c (ATP5MC1), forms the proton-conducting channel in the F(0) domain, that contains two crucial half-channels (inlet and outlet) that facilitate proton movement from the mitochondrial intermembrane space (IMS) into the matrix. Protons are taken up via the inlet half-channel and released through the outlet half-channel, following a Grotthuss mechanism. In Anas platyrhynchos (Mallard), this protein is ATP synthase F(0) complex subunit a.